We begin with the raw amino-acid sequence, 261 residues long: Imidazole glycerol phosphate synthase subunit HisF (261 aa).

Catalysis depends on residues aspartate 12 and aspartate 131.

It belongs to the HisA/HisF family. As to quaternary structure, heterodimer of HisH and HisF.

The protein localises to the cytoplasm. The enzyme catalyses 5-[(5-phospho-1-deoxy-D-ribulos-1-ylimino)methylamino]-1-(5-phospho-beta-D-ribosyl)imidazole-4-carboxamide + L-glutamine = D-erythro-1-(imidazol-4-yl)glycerol 3-phosphate + 5-amino-1-(5-phospho-beta-D-ribosyl)imidazole-4-carboxamide + L-glutamate + H(+). Its pathway is amino-acid biosynthesis; L-histidine biosynthesis; L-histidine from 5-phospho-alpha-D-ribose 1-diphosphate: step 5/9. In terms of biological role, IGPS catalyzes the conversion of PRFAR and glutamine to IGP, AICAR and glutamate. The HisF subunit catalyzes the cyclization activity that produces IGP and AICAR from PRFAR using the ammonia provided by the HisH subunit. The protein is Imidazole glycerol phosphate synthase subunit HisF of Brucella abortus (strain S19).